The sequence spans 326 residues: MLTFARQQQRRNVRWLLSLSLLVLLATLLSLCAGEQWIAPGDWLSARGELFVWQIRLPRTLAVLLVGAALALSGAVMQALFENPLAEPGLLGVSNGAGVGLIAAVLLGQGQLPGWALGLCAIAGALIITLILLRFARRHLSTSRLLLAGVALGIICSALMTWAIYFSTSFDLRQLMYWMMGGFGGVDWQQSWLMIALIPVLIWICCQSQPLNMLALGETSARQLGLPLWFWRNLLVIATGWMVGVSVAMAGAIGFIGLVIPHILRLCGLTDHRVLLPGCALAGAIALLLADVVARLALASAELPIGVVTATLGAPVFIWLLLKSAR.

The next 9 membrane-spanning stretches (helical) occupy residues 15–35, 61–81, 88–108, 112–132, 146–166, 184–204, 240–260, 274–294, and 302–322; these read WLLSLSLLVLLATLLSLCAGE, LAVLLVGAALALSGAVMQALF, PGLLGVSNGAGVGLIAAVLLG, LPGWALGLCAIAGALIITLIL, LLAGVALGIICSALMTWAIYF, GGVDWQQSWLMIALIPVLIWI, GWMVGVSVAMAGAIGFIGLVI, VLLPGCALAGAIALLLADVVA, and ELPIGVVTATLGAPVFIWLLL.

Belongs to the binding-protein-dependent transport system permease family. FecCD subfamily. In terms of assembly, the complex is composed of two ATP-binding proteins (BtuD), two transmembrane proteins (BtuC) and a solute-binding protein (BtuF).

Its subcellular location is the cell inner membrane. Part of the ABC transporter complex BtuCDF involved in vitamin B12 import. Involved in the translocation of the substrate across the membrane. The sequence is that of Vitamin B12 import system permease protein BtuC from Salmonella enteritidis PT4 (strain P125109).